Reading from the N-terminus, the 237-residue chain is Ras-related protein Rab-23 (237 aa).

Alanine 19 lines the GDP pocket. GTP is bound by residues valine 20, glycine 21, lysine 22, serine 23, and serine 24. 5 residues coordinate GDP: glycine 21, lysine 22, serine 23, serine 24, and aspartate 37. Serine 23 provides a ligand contact to Mg(2+). The Switch 1 motif lies at 28–46 (RYCKGIFTKDYKKTIGVDF). Tyrosine 38 is a binding site for GTP. Lysine 40 lines the GDP pocket. Residue threonine 41 coordinates GTP. Mg(2+) is bound by residues threonine 41 and aspartate 64. Residues 65–84 (TAGQEEFDAITKAYYRGAQA) carry the Switch 2 motif. Residues glycine 67, asparagine 121, lysine 122, aspartate 124, serine 151, valine 152, and lysine 153 each coordinate GTP. Residues asparagine 121, lysine 122, and aspartate 124 each coordinate GDP. Residues valine 152 and lysine 153 each contribute to the GDP site. Residues serine 186 and serine 187 each carry the phosphoserine modification. The disordered stretch occupies residues 204-237 (QNSSSLNGGDVINLRPNKQRTKRTRNPFSSCSVP). Cysteine 234 is subject to Cysteine methyl ester. Cysteine 234 carries S-geranylgeranyl cysteine lipidation. Positions 235-237 (SVP) are cleaved as a propeptide — removed in mature form.

This sequence belongs to the small GTPase superfamily. Rab family. In terms of assembly, interacts with SUFU. Requires Mg(2+) as cofactor. As to expression, detected in brain neurons (at protein level). Forebrain and midbrain.

Its subcellular location is the cell membrane. It localises to the cytoplasm. It is found in the endosome membrane. The protein localises to the cytoplasmic vesicle. The protein resides in the autophagosome. Its subcellular location is the phagosome. It localises to the phagosome membrane. The enzyme catalyses GTP + H2O = GDP + phosphate + H(+). With respect to regulation, regulated by guanine nucleotide exchange factors (GEFs) which promote the exchange of bound GDP for free GTP. Regulated by GTPase activating proteins (GAPs) which increase the GTP hydrolysis activity. Inhibited by GDP dissociation inhibitors (GDIs). The small GTPases Rab are key regulators of intracellular membrane trafficking, from the formation of transport vesicles to their fusion with membranes. Rabs cycle between an inactive GDP-bound form and an active GTP-bound form that is able to recruit to membranes different set of downstream effectors directly responsible for vesicle formation, movement, tethering and fusion. Plays a role in autophagic vacuole assembly, and mediates defense against pathogens, such as S.aureus, by promoting their capture by autophagosomes that then merge with lysosomes. Together with SUFU, prevents nuclear import of GLI1, and thereby inhibits GLI1 transcription factor activity. Regulates GLI1 in differentiating chondrocytes. Likewise, regulates GLI3 proteolytic processing and modulates GLI2 and GLI3 transcription factor activity. This is Ras-related protein Rab-23 from Mus musculus (Mouse).